We begin with the raw amino-acid sequence, 557 residues long: Formate--tetrahydrofolate ligase (557 aa).

66 to 73 (TPAGEGKS) is a binding site for ATP.

The protein belongs to the formate--tetrahydrofolate ligase family.

The enzyme catalyses (6S)-5,6,7,8-tetrahydrofolate + formate + ATP = (6R)-10-formyltetrahydrofolate + ADP + phosphate. The protein operates within one-carbon metabolism; tetrahydrofolate interconversion. This is Formate--tetrahydrofolate ligase from Clostridium botulinum (strain 657 / Type Ba4).